The chain runs to 102 residues: MTGSDLIGIMILAAGLFAVGVFGVLARRGMLFQLVALEVALSGPALGFIAAGAYHADPEGQGMFILVLTLAAAEVAVGLALFLRLRRLTGTDDSDAISGLKG.

3 helical membrane passes run Leu6 to Ala26, Met30 to Ala50, and Met63 to Leu83.

The protein belongs to the complex I subunit 4L family. In terms of assembly, NDH-1 is composed of 14 different subunits. Subunits NuoA, H, J, K, L, M, N constitute the membrane sector of the complex.

The protein localises to the cell inner membrane. The catalysed reaction is a quinone + NADH + 5 H(+)(in) = a quinol + NAD(+) + 4 H(+)(out). Its function is as follows. NDH-1 shuttles electrons from NADH, via FMN and iron-sulfur (Fe-S) centers, to quinones in the respiratory chain. The immediate electron acceptor for the enzyme in this species is believed to be ubiquinone. Couples the redox reaction to proton translocation (for every two electrons transferred, four hydrogen ions are translocated across the cytoplasmic membrane), and thus conserves the redox energy in a proton gradient. The protein is NADH-quinone oxidoreductase subunit K of Rhodopseudomonas palustris (strain TIE-1).